Consider the following 337-residue polypeptide: Fructose-1,6-bisphosphatase class 1 (337 aa).

Residues glutamate 94, aspartate 116, leucine 118, and aspartate 119 each coordinate Mg(2+). Substrate is bound by residues 119-122, asparagine 210, and lysine 276; that span reads DGSS. Position 282 (glutamate 282) interacts with Mg(2+).

The protein belongs to the FBPase class 1 family. Homotetramer. Mg(2+) serves as cofactor.

Its subcellular location is the cytoplasm. It carries out the reaction beta-D-fructose 1,6-bisphosphate + H2O = beta-D-fructose 6-phosphate + phosphate. It functions in the pathway carbohydrate biosynthesis; gluconeogenesis. The chain is Fructose-1,6-bisphosphatase class 1 from Burkholderia cenocepacia (strain HI2424).